A 546-amino-acid chain; its full sequence is MSAKDVKFGVEARDRMLRGVDILANAVKVTLGPKGRNVVLDKSFGAPRITKDGVTVAKEIELDDKFENMGAQMVREVASKSADAAGDGTTTATVLAQAIVREGAKAVAAGMNPMDLKRGIDLAVEAVVADLVKNSKKVTSNDEIAQVGTISANGDSEIGKFLADAMKKVGNEGVITVEEAKSLETELDVVEGMQFDRGYISPYFVTNADKMRVEMDDAYILINEKKLSSLNELLPLLEAVVQTGKPLVIVAEDVEGEALATLVVNRLRGGLKVAAVKAPGFGDRRKAMLQDIAILTGGQAISEDLGIKLENVNLSMLGRAKKVMIDKENTTIVNGAGKKADIEARVAQIKAQIEETTSDYDREKLQERLAKLAGGVAVIRVGGATEVEVKERKDRVDDAMHATRAAVEEGILPGGGVALLRASEQLKGLRTKNEDQKTGVEIVRKALSAPARQIAINAGEDGSVIVGKILEKEQYAYGFDSQTGDYVNMVSKGIIDPTKVVRTAIQNAASVASLLITTEAMVAELPKKNAGGPAMPPGGGMGGMDF.

Residues Thr-30–Pro-33, Lys-51, Asp-87–Thr-91, Gly-415, and Asp-496 each bind ATP.

Belongs to the chaperonin (HSP60) family. As to quaternary structure, forms a cylinder of 14 subunits composed of two heptameric rings stacked back-to-back. Interacts with the co-chaperonin GroES.

The protein localises to the cytoplasm. It carries out the reaction ATP + H2O + a folded polypeptide = ADP + phosphate + an unfolded polypeptide.. In terms of biological role, together with its co-chaperonin GroES, plays an essential role in assisting protein folding. The GroEL-GroES system forms a nano-cage that allows encapsulation of the non-native substrate proteins and provides a physical environment optimized to promote and accelerate protein folding. The protein is Chaperonin GroEL 4 of Bradyrhizobium sp. (strain BTAi1 / ATCC BAA-1182).